The primary structure comprises 375 residues: 23S rRNA (uracil(747)-C(5))-methyltransferase RlmC (375 aa).

C3, C11, C14, and C87 together coordinate [4Fe-4S] cluster. Positions 212, 241, 262, and 307 each coordinate S-adenosyl-L-methionine. C334 serves as the catalytic Nucleophile.

The protein belongs to the class I-like SAM-binding methyltransferase superfamily. RNA M5U methyltransferase family. RlmC subfamily.

It catalyses the reaction uridine(747) in 23S rRNA + S-adenosyl-L-methionine = 5-methyluridine(747) in 23S rRNA + S-adenosyl-L-homocysteine + H(+). Functionally, catalyzes the formation of 5-methyl-uridine at position 747 (m5U747) in 23S rRNA. The polypeptide is 23S rRNA (uracil(747)-C(5))-methyltransferase RlmC (Cronobacter sakazakii (strain ATCC BAA-894) (Enterobacter sakazakii)).